The chain runs to 100 residues: MAKKSLIEREKKRQKLEQKYHLIRRSPKKQISKAQSLSEKWELHGKLQSLPRNSAPTRLRRRCFSTGRPRGNCRDFGLSGHILREMVHEGLLPGATRSSW.

Belongs to the universal ribosomal protein uS14 family. In terms of assembly, part of the 30S ribosomal subunit.

The protein localises to the plastid. It is found in the chloroplast. Binds 16S rRNA, required for the assembly of 30S particles. The polypeptide is Small ribosomal subunit protein uS14c (Cicer arietinum (Chickpea)).